The primary structure comprises 292 residues: 4-hydroxy-tetrahydrodipicolinate synthase (292 aa).

Thr-45 contacts pyruvate. Catalysis depends on Tyr-133, which acts as the Proton donor/acceptor. Catalysis depends on Lys-161, which acts as the Schiff-base intermediate with substrate. Ile-203 is a binding site for pyruvate.

Belongs to the DapA family. As to quaternary structure, homotetramer; dimer of dimers.

It localises to the cytoplasm. It carries out the reaction L-aspartate 4-semialdehyde + pyruvate = (2S,4S)-4-hydroxy-2,3,4,5-tetrahydrodipicolinate + H2O + H(+). Its pathway is amino-acid biosynthesis; L-lysine biosynthesis via DAP pathway; (S)-tetrahydrodipicolinate from L-aspartate: step 3/4. Its function is as follows. Catalyzes the condensation of (S)-aspartate-beta-semialdehyde [(S)-ASA] and pyruvate to 4-hydroxy-tetrahydrodipicolinate (HTPA). This Dechloromonas aromatica (strain RCB) protein is 4-hydroxy-tetrahydrodipicolinate synthase.